The chain runs to 424 residues: L-threonine:uridine-5'-aldehyde transaldolase (424 aa).

At lysine 235 the chain carries N6-(pyridoxal phosphate)lysine.

The protein belongs to the SHMT family. The cofactor is pyridoxal 5'-phosphate.

The catalysed reaction is uridine-5'-aldehyde + L-threonine = (5'S,6'S)-C-glycyluridine + acetaldehyde. It participates in antibiotic biosynthesis. Functionally, transaldolase involved in the biosynthesis of the lipopeptidyl nucleoside antibiotic A-90289. Catalyzes the condensation of L-threonine and uridine-5'-aldehyde to form 5'-C-glycyluridine (GlyU). Forms (5'S,6'S)-GlyU. Has no activity with alternative amino acids, such as glycine or serine. This chain is L-threonine:uridine-5'-aldehyde transaldolase, found in Streptomyces sp.